The primary structure comprises 294 residues: Nucleotide-binding protein LVIS_0651 (294 aa).

An ATP-binding site is contributed by 12–19 (GMSGAGKT). A GTP-binding site is contributed by 62 to 65 (DLRS).

This sequence belongs to the RapZ-like family.

Functionally, displays ATPase and GTPase activities. This is Nucleotide-binding protein LVIS_0651 from Levilactobacillus brevis (strain ATCC 367 / BCRC 12310 / CIP 105137 / JCM 1170 / LMG 11437 / NCIMB 947 / NCTC 947) (Lactobacillus brevis).